The primary structure comprises 498 residues: DEAD-box ATP-dependent RNA helicase 12 (498 aa).

A disordered region spans residues 1-114 (MNTNRGRYPP…RLPPPDTRYQ (114 aa)). The span at 27–65 (SYRQQQPPQDQQYVQRGYSQNPQQMQLQQQHQQQQQQQQ) shows a compositional bias: low complexity. Residues 74-96 (GNASNANEVVQQTTQPEASSDAN) show a composition bias toward polar residues. The short motif at 124-152 (NEFEDYFLKRDLLKGIYEKGFEKPSPIQE) is the Q motif element. Positions 155–325 (IPIALTGSDI…DRHLRKPYVI (171 aa)) constitute a Helicase ATP-binding domain. 168 to 175 (AKNGTGKT) contributes to the ATP binding site. T230 is modified (phosphothreonine). Residues 273 to 276 (DEAD) carry the DEAD box motif. The Helicase C-terminal domain occupies 335–495 (GVTQYYAFVE…PIPSNIDQAI (161 aa)).

This sequence belongs to the DEAD box helicase family. DDX6/DHH1 subfamily.

It is found in the cytoplasm. The protein localises to the P-body. It carries out the reaction ATP + H2O = ADP + phosphate + H(+). Its function is as follows. ATP-dependent RNA helicase involved in mRNA turnover, and more specifically in mRNA decapping. The polypeptide is DEAD-box ATP-dependent RNA helicase 12 (RH12) (Arabidopsis thaliana (Mouse-ear cress)).